The following is a 236-amino-acid chain: Movement and silencing protein TGBp1 (236 aa).

Residues 1–117 (MDHIHHLLSS…DNLFEPHYTL (117 aa)) form the (+)RNA virus helicase ATP-binding domain. One can recognise a (+)RNA virus helicase C-terminal domain in the interval 118–236 (EITYRFGPNT…LGPDAFDSSP (119 aa)).

It belongs to the Tymovirales TGBp1 protein family. Homodimer and homooligomer. Interacts with capsid protein. Interacts with host AGO1; this interaction targets the host protein for degradation, thereby suppressing the antiviral RNA silencing.

The protein resides in the host cytoplasm. In terms of biological role, transports viral genome to neighboring plant cells directly through plasmosdesmata, without any budding. The movement protein allows efficient cell to cell propagation, by bypassing the host cell wall barrier. Increases plasmodesma size exclusion limit. Acts as a suppressor of RNA-mediated gene silencing, also known as post-transcriptional gene silencing (PTGS), a mechanism of plant viral defense that limits the accumulation of viral RNAs. This White clover mosaic virus (strain O) (WCMV) protein is Movement and silencing protein TGBp1.